The sequence spans 476 residues: Glutamate--tRNA ligase (476 aa).

A 'HIGH' region motif is present at residues 9–19 (PSPTGLFHIGT). Residues 248–252 (KLSKR) carry the 'KMSKS' region motif. Lys-251 serves as a coordination point for ATP.

The protein belongs to the class-I aminoacyl-tRNA synthetase family. Glutamate--tRNA ligase type 1 subfamily. Monomer.

It localises to the cytoplasm. It carries out the reaction tRNA(Glu) + L-glutamate + ATP = L-glutamyl-tRNA(Glu) + AMP + diphosphate. Functionally, catalyzes the attachment of glutamate to tRNA(Glu) in a two-step reaction: glutamate is first activated by ATP to form Glu-AMP and then transferred to the acceptor end of tRNA(Glu). This is Glutamate--tRNA ligase from Prochlorococcus marinus (strain AS9601).